A 289-amino-acid chain; its full sequence is Arabinogalactan O-methyltransferase 1 (289 aa).

A helical transmembrane segment spans residues 12–32 (IITGVLLAGLVGGALLFTSFI).

This sequence belongs to the methyltransferase superfamily. As to quaternary structure, binds to the translation initiation factors TIF3E1.

It is found in the golgi apparatus membrane. Its function is as follows. Involved in the methylation of glucuronic acid of different plant cell wall component, but mainly on side chains of arabinogalactans. The sequence is that of Arabinogalactan O-methyltransferase 1 (AGM1) from Arabidopsis thaliana (Mouse-ear cress).